The chain runs to 592 residues: Frizzled-1 (592 aa).

The interval M1 to C26 is disordered. Residues M1–G48 form the signal peptide. The span at P7–R20 shows a compositional bias: gly residues. Residues Q49–W271 lie on the Extracellular side of the membrane. Positions P65–Q184 constitute an FZ domain. Intrachain disulfides connect C70-C131, C78-C124, C115-C152, C141-C181, and C145-C169. An N-linked (GlcNAc...) asparagine glycan is attached at N84. Residue N185 is glycosylated (N-linked (GlcNAc...) asparagine). Residues N185–A219 are disordered. Over residues R207 to E218 the composition is skewed to gly residues. The chain crosses the membrane as a helical span at residues I272–V292. At D293–P303 the chain is on the cytoplasmic side. Residues I304 to L324 traverse the membrane as a helical segment. The Extracellular segment spans residues E325–C351. A helical transmembrane segment spans residues T352 to L372. Over S373 to Q394 the chain is Cytoplasmic. Residues Y395 to G415 traverse the membrane as a helical segment. Residues Q416–G438 are Extracellular-facing. Residues F439–F459 form a helical membrane-spanning segment. Over V460–R485 the chain is Cytoplasmic. The chain crosses the membrane as a helical span at residues I486–Y506. Over E507–T546 the chain is Extracellular. N-linked (GlcNAc...) asparagine glycosylation is present at N533. The helical transmembrane segment at V547–W567 threads the bilayer. Topologically, residues S568–V592 are cytoplasmic. The Lys-Thr-X-X-X-Trp motif, mediates interaction with the PDZ domain of Dvl family members motif lies at K570–W575. A PDZ-binding motif is present at residues T590 to V592.

The protein belongs to the G-protein coupled receptor Fz/Smo family. As to expression, expressed in the lens, otic placode (medial wall of the vesicle) and in epibranchial placode. Also expressed in the developing somites (dermomyotome).

The protein localises to the cell membrane. Functionally, receptor for Wnt proteins. Functions in the canonical Wnt/beta-catenin signaling pathway. The canonical Wnt/beta-catenin signaling pathway leads to the activation of disheveled proteins, inhibition of GSK-3 kinase, nuclear accumulation of beta-catenin and activation of Wnt target genes. A second signaling pathway involving PKC and calcium fluxes has been seen for some family members, but it is not yet clear if it represents a distinct pathway or if it can be integrated in the canonical pathway, as PKC seems to be required for Wnt-mediated inactivation of GSK-3 kinase. Both pathways seem to involve interactions with G-proteins. May be involved in transduction and intercellular transmission of polarity information during tissue morphogenesis and/or in differentiated tissues. This Gallus gallus (Chicken) protein is Frizzled-1 (FZD1).